The following is a 314-amino-acid chain: Melanoma-associated antigen 6 (314 aa).

Residues 1 to 20 (MPLEQRSQHCKPEEGLEARG) are compositionally biased toward basic and acidic residues. The tract at residues 1–99 (MPLEQRSQHC…QEEEGPSTFP (99 aa)) is disordered. Over residues 21-44 (EALGLVGAQAPATEEQEAASSSST) the composition is skewed to low complexity. The span at 65 to 87 (PQGASSLPTTMNYPLWSQSYEDS) shows a compositional bias: polar residues. Positions 109–308 (LSRKVAKLVH…ISYPLLHEWA (200 aa)) constitute an MAGE domain.

Interacts with TRIM28. In terms of processing, ubiquitinated by the DCX(DCAF12) complex specifically recognizes the diglutamate (Glu-Glu) at the C-terminus, leading to its degradation. Expressed in many tumors of several types, such as melanoma, head and neck squamous cell carcinoma, lung carcinoma and breast carcinoma, but not in normal tissues except for testes.

In terms of biological role, activator of ubiquitin ligase activity of RING-type zinc finger-containing E3 ubiquitin-protein ligases that acts as a repressor of autophagy. May enhance ubiquitin ligase activity of TRIM28 and stimulate p53/TP53 ubiquitination by TRIM28. Proposed to act through recruitment and/or stabilization of the Ubl-conjugating enzyme (E2) at the E3:substrate complex. May play a role in tumor transformation or aspects of tumor progression. In vitro promotes cell viability in melanoma cell lines. The polypeptide is Melanoma-associated antigen 6 (Homo sapiens (Human)).